The following is a 505-amino-acid chain: Glutamate--tRNA ligase (505 aa).

The 'HIGH' region signature appears at 12–22 (PSPTGDPHVGT). The 'KMSKS' region motif lies at 253 to 257 (KLSKR). Lysine 256 is a binding site for ATP.

Belongs to the class-I aminoacyl-tRNA synthetase family. Glutamate--tRNA ligase type 1 subfamily. As to quaternary structure, monomer.

Its subcellular location is the cytoplasm. It catalyses the reaction tRNA(Glu) + L-glutamate + ATP = L-glutamyl-tRNA(Glu) + AMP + diphosphate. In terms of biological role, catalyzes the attachment of glutamate to tRNA(Glu) in a two-step reaction: glutamate is first activated by ATP to form Glu-AMP and then transferred to the acceptor end of tRNA(Glu). This chain is Glutamate--tRNA ligase, found in Chlamydia pneumoniae (Chlamydophila pneumoniae).